The sequence spans 434 residues: Cobyrinate a,c-diamide synthase (434 aa).

One can recognise a GATase cobBQ-type domain in the interval 239–430; it reads KMAIAYDPAF…SHLHFSNFQL (192 aa). The active-site Nucleophile is Cys-320.

The protein belongs to the CobB/CbiA family. The cofactor is Mg(2+).

The enzyme catalyses cob(II)yrinate + 2 L-glutamine + 2 ATP + 2 H2O = cob(II)yrinate a,c diamide + 2 L-glutamate + 2 ADP + 2 phosphate + 2 H(+). It participates in cofactor biosynthesis; adenosylcobalamin biosynthesis; cob(II)yrinate a,c-diamide from sirohydrochlorin (anaerobic route): step 10/10. Its function is as follows. Catalyzes the ATP-dependent amidation of the two carboxylate groups at positions a and c of cobyrinate, using either L-glutamine or ammonia as the nitrogen source. The polypeptide is Cobyrinate a,c-diamide synthase (Saccharolobus solfataricus (strain ATCC 35092 / DSM 1617 / JCM 11322 / P2) (Sulfolobus solfataricus)).